The following is a 214-amino-acid chain: Reticulon-3-A (214 aa).

Positions 1–21 (MAETSGPQSSHISSSSVGEKG) are disordered. The Reticulon domain maps to 26 to 214 (VRDLLYWRDV…LPGALKKKSE (189 aa)). 2 helical membrane passes run 46–66 (MVLL…YLVL) and 155–175 (VFNG…APIV).

In terms of assembly, homodimer. Expressed in the animal hemisphere at the four-cell stage. During gastrulation, expression becomes restricted to the prospective neuroectoderm. At the early tail bud stage, expressed in the head structure. At the tadpole stage, expressed in head and neural tissues including the otic vesicle and optic nerve.

The protein localises to the endoplasmic reticulum membrane. It is found in the golgi apparatus membrane. In terms of biological role, may be involved in membrane trafficking in the early secretory pathway. The polypeptide is Reticulon-3-A (rtn3-a) (Xenopus laevis (African clawed frog)).